The chain runs to 78 residues: Mitochondrial import inner membrane translocase subunit Tim9 (78 aa).

The short motif at cysteine 24–cysteine 48 is the Twin CX3C motif element. 2 cysteine pairs are disulfide-bonded: cysteine 24/cysteine 48 and cysteine 28/cysteine 44.

The protein belongs to the small Tim family. In terms of assembly, heterohexamer; composed of 3 copies of tim-9/tin-9.1 and 3 copies of tim-10/tin-10, named soluble 70 kDa complex. The complex associates with the tim-22 component of the TIM22 complex. Interacts with multi-pass transmembrane proteins in transit.

Its subcellular location is the mitochondrion inner membrane. Its function is as follows. Mitochondrial intermembrane chaperone that participates in the import and insertion of multi-pass transmembrane proteins into the mitochondrial inner membrane. May also be required for the transfer of beta-barrel precursors from the TOM complex to the sorting and assembly machinery (SAM complex) of the outer membrane. Acts as a chaperone-like protein that protects the hydrophobic precursors from aggregation and guide them through the mitochondrial intermembrane space. This is Mitochondrial import inner membrane translocase subunit Tim9 (tin-9.1) from Caenorhabditis briggsae.